A 243-amino-acid chain; its full sequence is Large ribosomal subunit protein uL2 (243 aa).

Disordered regions lie at residues 1-23 (MGKR…PSHR) and 204-243 (PFGG…GGRR). A compositionally biased stretch (basic residues) spans 228 to 243 (KVGHIAARKTGRGGRR).

Belongs to the universal ribosomal protein uL2 family. In terms of assembly, part of the 50S ribosomal subunit. Forms a bridge to the 30S subunit in the 70S ribosome.

One of the primary rRNA binding proteins. Required for association of the 30S and 50S subunits to form the 70S ribosome, for tRNA binding and peptide bond formation. It has been suggested to have peptidyltransferase activity; this is somewhat controversial. Makes several contacts with the 16S rRNA in the 70S ribosome. This chain is Large ribosomal subunit protein uL2, found in Methanopyrus kandleri (strain AV19 / DSM 6324 / JCM 9639 / NBRC 100938).